The following is a 139-amino-acid chain: Nucleoside diphosphate kinase (139 aa).

6 residues coordinate ATP: Lys9, Phe57, Arg85, Thr91, Arg102, and Asn112. His115 serves as the catalytic Pros-phosphohistidine intermediate.

The protein belongs to the NDK family. Homotetramer. It depends on Mg(2+) as a cofactor.

The protein resides in the cytoplasm. It catalyses the reaction a 2'-deoxyribonucleoside 5'-diphosphate + ATP = a 2'-deoxyribonucleoside 5'-triphosphate + ADP. The catalysed reaction is a ribonucleoside 5'-diphosphate + ATP = a ribonucleoside 5'-triphosphate + ADP. Functionally, major role in the synthesis of nucleoside triphosphates other than ATP. The ATP gamma phosphate is transferred to the NDP beta phosphate via a ping-pong mechanism, using a phosphorylated active-site intermediate. This is Nucleoside diphosphate kinase from Neorickettsia sennetsu (strain ATCC VR-367 / Miyayama) (Ehrlichia sennetsu).